The chain runs to 178 residues: Large ribosomal subunit protein uL6 (178 aa).

Belongs to the universal ribosomal protein uL6 family. Part of the 50S ribosomal subunit.

This protein binds to the 23S rRNA, and is important in its secondary structure. It is located near the subunit interface in the base of the L7/L12 stalk, and near the tRNA binding site of the peptidyltransferase center. The chain is Large ribosomal subunit protein uL6 from Streptococcus gordonii (strain Challis / ATCC 35105 / BCRC 15272 / CH1 / DL1 / V288).